A 186-amino-acid polypeptide reads, in one-letter code: Nuclear transcription factor Y subunit C-5 (186 aa).

The tract at residues 166-186 (QMPGAWTEEDATGANGGNGGN) is disordered.

Belongs to the NFYC/HAP5 subunit family. Heterotrimeric transcription factor composed of three components, NF-YA, NF-YB and NF-YC. NF-YB and NF-YC must interact and dimerize for NF-YA association and DNA binding. Expressed in inflorescences and flowers.

It localises to the nucleus. In terms of biological role, stimulates the transcription of various genes by recognizing and binding to a CCAAT motif in promoters. The sequence is that of Nuclear transcription factor Y subunit C-5 (NFYC5) from Arabidopsis thaliana (Mouse-ear cress).